The chain runs to 45 residues: Parabutoporin (45 aa).

Monomer and homodimer. In terms of tissue distribution, expressed by the venom gland.

The protein resides in the secreted. It is found in the target cell membrane. Functionally, at high concentrations, acts as a pore former in cellular membranes and causes the leakage of the cells. At submicromolar concentrations, degranulates granulocytes and has a weak hemolytic activity against human red blood cells. Also strongly inhibits the production of superoxide anions. Has a strong antibacterial activity against Gram-negative bacteria but is less active against Gram-positive bacteria. Also has antifungal activity. Induces reversible G-protein dependent Ca(2+) release from intracellular stores and increase Ca(2+) influx in HL-60 cells. Induces the activation of the Rac pathway in granulocytes. Synergistically enhances the excitatory effects of short and long chain ion-channel-specific neurotoxins by interaction with the neuronal membranes. The sequence is that of Parabutoporin from Parabuthus schlechteri (Scorpion).